A 37-amino-acid polypeptide reads, in one-letter code: Large ribosomal subunit protein bL36 (37 aa).

It belongs to the bacterial ribosomal protein bL36 family.

The protein is Large ribosomal subunit protein bL36 of Clostridium perfringens (strain ATCC 13124 / DSM 756 / JCM 1290 / NCIMB 6125 / NCTC 8237 / Type A).